Here is a 321-residue protein sequence, read N- to C-terminus: Glucokinase (321 aa).

An ATP-binding site is contributed by 8–13; that stretch reads GDVGGT.

It belongs to the bacterial glucokinase family.

It localises to the cytoplasm. It catalyses the reaction D-glucose + ATP = D-glucose 6-phosphate + ADP + H(+). This is Glucokinase from Escherichia fergusonii (strain ATCC 35469 / DSM 13698 / CCUG 18766 / IAM 14443 / JCM 21226 / LMG 7866 / NBRC 102419 / NCTC 12128 / CDC 0568-73).